The chain runs to 279 residues: MSAIIELKKVTFNYHKDQEKPTLDGVSFHVKQGEWLSIIGHNGSGKSTTIRLIDGLLEPESGSIIVDGDLLTITNVWEIRHKIGMVFQNPDNQFVGATVEDDVAFGLENKGIAHEDIKERVNHALELVGMQNFKEKEPARLSGGQKQRVAIAGAVAMKPKIIILDEATSMLDPKGRLELIKTIKNIRDDYQLTVISITHDLDEVALSDRVLVMKDGQVESTSTPEQLFARGDELLQLGLDIPFTTSVVQMLQEEGYPIDYGYLTEKELENQLCQLISKM.

The ABC transporter domain maps to 5-240; the sequence is IELKKVTFNY…GDELLQLGLD (236 aa). Residue 40 to 47 coordinates ATP; sequence GHNGSGKS.

The protein belongs to the ABC transporter superfamily. Energy-coupling factor EcfA family. In terms of assembly, forms a stable energy-coupling factor (ECF) transporter complex composed of 2 membrane-embedded substrate-binding proteins (S component), 2 ATP-binding proteins (A component) and 2 transmembrane proteins (T component).

The protein resides in the cell membrane. Functionally, ATP-binding (A) component of a common energy-coupling factor (ECF) ABC-transporter complex. Unlike classic ABC transporters this ECF transporter provides the energy necessary to transport a number of different substrates. This Streptococcus pyogenes serotype M5 (strain Manfredo) protein is Energy-coupling factor transporter ATP-binding protein EcfA1.